The primary structure comprises 68 residues: ATP synthase F(0) complex subunit 8 (68 aa).

The chain crosses the membrane as a helical span at residues 8–24 (TWFTTILSMFLTLFIIF). Lys-54 is modified (N6-acetyllysine; alternate). Lys-54 is subject to N6-succinyllysine; alternate. The residue at position 57 (Lys-57) is an N6-acetyllysine.

This sequence belongs to the ATPase protein 8 family. As to quaternary structure, component of the ATP synthase complex composed at least of ATP5F1A/subunit alpha, ATP5F1B/subunit beta, ATP5MC1/subunit c (homooctomer), MT-ATP6/subunit a, MT-ATP8/subunit 8, ATP5ME/subunit e, ATP5MF/subunit f, ATP5MG/subunit g, ATP5MK/subunit k, ATP5MJ/subunit j, ATP5F1C/subunit gamma, ATP5F1D/subunit delta, ATP5F1E/subunit epsilon, ATP5PF/subunit F6, ATP5PB/subunit b, ATP5PD/subunit d, ATP5PO/subunit OSCP. ATP synthase complex consists of a soluble F(1) head domain (subunits alpha(3) and beta(3)) - the catalytic core - and a membrane F(0) domain - the membrane proton channel (subunits c, a, 8, e, f, g, k and j). These two domains are linked by a central stalk (subunits gamma, delta, and epsilon) rotating inside the F1 region and a stationary peripheral stalk (subunits F6, b, d, and OSCP). Interacts with PRICKLE3.

The protein localises to the mitochondrion membrane. Functionally, subunit 8, of the mitochondrial membrane ATP synthase complex (F(1)F(0) ATP synthase or Complex V) that produces ATP from ADP in the presence of a proton gradient across the membrane which is generated by electron transport complexes of the respiratory chain. ATP synthase complex consist of a soluble F(1) head domain - the catalytic core - and a membrane F(1) domain - the membrane proton channel. These two domains are linked by a central stalk rotating inside the F(1) region and a stationary peripheral stalk. During catalysis, ATP synthesis in the catalytic domain of F(1) is coupled via a rotary mechanism of the central stalk subunits to proton translocation. In vivo, can only synthesize ATP although its ATP hydrolase activity can be activated artificially in vitro. Part of the complex F(0) domain. This Hippopotamus amphibius (Hippopotamus) protein is ATP synthase F(0) complex subunit 8.